We begin with the raw amino-acid sequence, 350 residues long: Pleckstrin (350 aa).

One can recognise a PH 1 domain in the interval 4–101; the sequence is KRIREGYLVK…WVRDIKKAIK (98 aa). Lysine 64 carries the N6-acetyllysine modification. Phosphoserine is present on residues serine 113 and serine 117. Residues 136-221 form the DEP domain; sequence PEKGIKELNL…NPDAFYYFPD (86 aa). The 104-residue stretch at 244–347 folds into the PH 2 domain; the sequence is IIIKQGCLLK…WIKAIQVASR (104 aa).

Major protein kinase C substrate of platelets. In Rattus norvegicus (Rat), this protein is Pleckstrin (Plek).